The primary structure comprises 430 residues: Flavin-dependent monooxygenase eupH (430 aa).

FAD is bound by residues A11–G14, E33–R34, Q43, R107, Y282, and D306.

It belongs to the aromatic-ring hydroxylase family. The cofactor is FAD.

It functions in the pathway secondary metabolite biosynthesis; terpenoid biosynthesis. Its function is as follows. Flavin-dependent monooxygenase; part of the gene cluster that mediates the biosynthesis of eupenifeldin, a bistropolone meroterpenoid that acts as an antitumor agent. The first step of eupenifeldin biosynthesis is the biosynthesis of 3-methylorcinaldehyde performed by the non-reducing polyketide synthase eupA. Oxidative dearomatization of 3-methylorcinaldehyde likely catalyzed by the FAD-dependent monooxygenase eupB is followed by oxidative ring expansion by the 2-oxoglutarate-dependent dioxygenase eupC to provide the first tropolone metabolite, tropolone stipitaldehyde. In parallel, generation of sesquiterpene alpha-humulene from farnesylpyrophosphate (FPP) is catalyzed by the terpene cyclase eupE. The cytochrome P450 monooxygenase eupD then hydroxylates humulene to humulenol. The putative Diels-Alderase eupF probably catalyzes the formation of the tropolone-humulene skeleton by linking humulenol and the polyketide moiety. The short-chain dehydrogenase/reductase eupG and the flavin-dependent monooxygenase eupH are also essential for eupenifeldin biosynthesis and are likely the additional decorating enzymes of the tropolone-humulene skeleton to produce final eupenifeldin or derivatives. The chain is Flavin-dependent monooxygenase eupH from Phoma sp.